A 278-amino-acid chain; its full sequence is NAD-capped RNA hydrolase NudC (278 aa).

R84 lines the substrate pocket. 2 residues coordinate Zn(2+): C114 and C117. Substrate is bound at residue E127. Zn(2+) is bound by residues C132 and C135. Y140 contacts substrate. The region spanning 141–265 is the Nudix hydrolase domain; the sequence is PRLSPSMIVL…IARHLIDLYL (125 aa). Residues A174, E190, and E194 each coordinate a divalent metal cation. Positions 175–196 match the Nudix box motif; that stretch reads GFVEAGESVEQCVVREVREEVG. A substrate-binding site is contributed by 208-215; the sequence is QNWPFPHS. A divalent metal cation is bound at residue E235. A257 serves as a coordination point for substrate.

It belongs to the Nudix hydrolase family. NudC subfamily. In terms of assembly, homodimer. Requires Mg(2+) as cofactor. The cofactor is Mn(2+). Zn(2+) serves as cofactor.

It catalyses the reaction a 5'-end NAD(+)-phospho-ribonucleoside in mRNA + H2O = a 5'-end phospho-adenosine-phospho-ribonucleoside in mRNA + beta-nicotinamide D-ribonucleotide + 2 H(+). The enzyme catalyses NAD(+) + H2O = beta-nicotinamide D-ribonucleotide + AMP + 2 H(+). The catalysed reaction is NADH + H2O = reduced beta-nicotinamide D-ribonucleotide + AMP + 2 H(+). Its function is as follows. mRNA decapping enzyme that specifically removes the nicotinamide adenine dinucleotide (NAD) cap from a subset of mRNAs by hydrolyzing the diphosphate linkage to produce nicotinamide mononucleotide (NMN) and 5' monophosphate mRNA. The NAD-cap is present at the 5'-end of some mRNAs and stabilizes RNA against 5'-processing. Has preference for mRNAs with a 5'-end purine. Catalyzes the hydrolysis of a broad range of dinucleotide pyrophosphates. This is NAD-capped RNA hydrolase NudC from Pseudomonas aeruginosa (strain LESB58).